The primary structure comprises 920 residues: Isoleucine--tRNA ligase (920 aa).

The 'HIGH' region motif lies at 58 to 68 (PYANGHLHLGH). Residue Glu569 coordinates L-isoleucyl-5'-AMP. A 'KMSKS' region motif is present at residues 610 to 614 (KMSKS). ATP is bound at residue Lys613. 4 residues coordinate Zn(2+): Cys895, Cys898, Cys910, and Cys913.

It belongs to the class-I aminoacyl-tRNA synthetase family. IleS type 1 subfamily. As to quaternary structure, monomer. Zn(2+) serves as cofactor.

It localises to the cytoplasm. The enzyme catalyses tRNA(Ile) + L-isoleucine + ATP = L-isoleucyl-tRNA(Ile) + AMP + diphosphate. In terms of biological role, catalyzes the attachment of isoleucine to tRNA(Ile). As IleRS can inadvertently accommodate and process structurally similar amino acids such as valine, to avoid such errors it has two additional distinct tRNA(Ile)-dependent editing activities. One activity is designated as 'pretransfer' editing and involves the hydrolysis of activated Val-AMP. The other activity is designated 'posttransfer' editing and involves deacylation of mischarged Val-tRNA(Ile). This is Isoleucine--tRNA ligase from Helicobacter pylori (strain HPAG1).